We begin with the raw amino-acid sequence, 332 residues long: Casein kinase II subunit alpha (332 aa).

Positions 43 to 327 (YEIIRKVGRG…TCQEAMAHPY (285 aa)) constitute a Protein kinase domain. ATP-binding positions include 49 to 57 (VGRGKYSEV) and K72. D160 functions as the Proton acceptor in the catalytic mechanism.

The protein belongs to the protein kinase superfamily. Ser/Thr protein kinase family. CK2 subfamily. Tetramer composed of two alpha chains, one beta chain and one beta' chain.

It carries out the reaction L-seryl-[protein] + ATP = O-phospho-L-seryl-[protein] + ADP + H(+). It catalyses the reaction L-threonyl-[protein] + ATP = O-phospho-L-threonyl-[protein] + ADP + H(+). Its function is as follows. Catalytic subunit of a constitutively active serine/threonine-protein kinase complex that phosphorylates a large number of substrates containing acidic residues C-terminal to the phosphorylated serine or threonine. The protein is Casein kinase II subunit alpha of Schizosaccharomyces pombe (strain 972 / ATCC 24843) (Fission yeast).